The chain runs to 510 residues: 2,3-bisphosphoglycerate-independent phosphoglycerate mutase (510 aa).

Mn(2+)-binding residues include aspartate 12 and serine 62. The Phosphoserine intermediate role is filled by serine 62. Substrate contacts are provided by residues histidine 123, 153 to 154 (RD), arginine 185, arginine 191, 260 to 263 (RPDR), and lysine 335. The Mn(2+) site is built by aspartate 402, histidine 406, aspartate 443, histidine 444, and histidine 461.

This sequence belongs to the BPG-independent phosphoglycerate mutase family. In terms of assembly, monomer. Mn(2+) serves as cofactor.

It catalyses the reaction (2R)-2-phosphoglycerate = (2R)-3-phosphoglycerate. It participates in carbohydrate degradation; glycolysis; pyruvate from D-glyceraldehyde 3-phosphate: step 3/5. In terms of biological role, catalyzes the interconversion of 2-phosphoglycerate and 3-phosphoglycerate. This chain is 2,3-bisphosphoglycerate-independent phosphoglycerate mutase, found in Listeria welshimeri serovar 6b (strain ATCC 35897 / DSM 20650 / CCUG 15529 / CIP 8149 / NCTC 11857 / SLCC 5334 / V8).